A 706-amino-acid polypeptide reads, in one-letter code: Zinc finger CCCH domain-containing protein 56 (706 aa).

2 ANK repeats span residues 83–113 (EQRT…ELNL) and 118–150 (DKST…DPNI). The span at 211–221 (SSLLSLDSVSS) shows a compositional bias: low complexity. The tract at residues 211-235 (SSLLSLDSVSSPTKPHGTDVTFASE) is disordered. C3H1-type zinc fingers lie at residues 302-324 (PCPD…HGVF) and 332-356 (QYRT…HANE). 3 disordered regions span residues 396–427 (PSAA…QQNI), 545–616 (SPKN…QTHG), and 652–692 (QMLK…TRES). Composition is skewed to polar residues over residues 397 to 427 (SAAQ…QQNI) and 545 to 560 (SPKN…QASS). A Phosphoserine modification is found at S568. Residues 580–592 (SRSLSSRDFGSSL) are compositionally biased toward low complexity. 3 stretches are compositionally biased toward polar residues: residues 600–616 (DSGS…QTHG), 652–667 (QMLK…NRVV), and 677–686 (QGGSSVNPHN).

In Arabidopsis thaliana (Mouse-ear cress), this protein is Zinc finger CCCH domain-containing protein 56.